A 145-amino-acid polypeptide reads, in one-letter code: 3-hydroxyacyl-[acyl-carrier-protein] dehydratase FabZ (145 aa).

His-48 is a catalytic residue.

It belongs to the thioester dehydratase family. FabZ subfamily.

Its subcellular location is the cytoplasm. The enzyme catalyses a (3R)-hydroxyacyl-[ACP] = a (2E)-enoyl-[ACP] + H2O. Involved in unsaturated fatty acids biosynthesis. Catalyzes the dehydration of short chain beta-hydroxyacyl-ACPs and long chain saturated and unsaturated beta-hydroxyacyl-ACPs. This Geobacillus sp. (strain WCH70) protein is 3-hydroxyacyl-[acyl-carrier-protein] dehydratase FabZ.